The chain runs to 318 residues: MNTTPDTALLVVNLGTPESPTAPAVRRYLAEFLSDRRVVAIPPLFWKPLLYGVILPIRGPKSAEKYAKVWLPEGSPLAVYTRRLAGGLQAVMPDWHVEWAMRYGEPALRKTLDRLRARGIKRIVVLPLYPQYSTTTTASIQDVVDAWRTSAPEIAVEVIQDYCEDTGWVAAIAESIRAHWQVHGRSEKLMFSFHGLPQRVADAGDPYPQQCERSAQAIVAALGLGADEWQMGYQSRFGAERWLQPYAEPTLWKLAEGGVRSFDLVCPGFATDCLETLEEVALGFSETLAERGATLSYIPCLNASDAHAHALAAMARRA.

Fe cation-binding residues include histidine 194 and glutamate 275.

It belongs to the ferrochelatase family.

It is found in the cytoplasm. The enzyme catalyses heme b + 2 H(+) = protoporphyrin IX + Fe(2+). The protein operates within porphyrin-containing compound metabolism; protoheme biosynthesis; protoheme from protoporphyrin-IX: step 1/1. Functionally, catalyzes the ferrous insertion into protoporphyrin IX. The chain is Ferrochelatase from Xanthomonas axonopodis pv. citri (strain 306).